A 132-amino-acid polypeptide reads, in one-letter code: MTMTDPIADFLTRLRNANSAYHDEVTVPHSNIKANIAQILKNEGYIRDFRTEDARVGKSLIIQLKYGPSRERSIAGLRRVSKPGLRVYAKSINLPRVLGGLGVVIISTSSGLLTDRQAARQGVGGEVLAYVW.

Belongs to the universal ribosomal protein uS8 family. In terms of assembly, part of the 30S ribosomal subunit. Contacts proteins S5 and S12.

Its function is as follows. One of the primary rRNA binding proteins, it binds directly to 16S rRNA central domain where it helps coordinate assembly of the platform of the 30S subunit. This chain is Small ribosomal subunit protein uS8, found in Mycobacterium leprae (strain Br4923).